A 205-amino-acid chain; its full sequence is DNA-directed RNA polymerases IV and V subunit 4 (205 aa).

The disordered stretch occupies residues 1 to 79 (MSEKGGKGLK…TKSSKNSLHS (79 aa)). Positions 48–60 (NVSSDQQPFQSSA) are enriched in polar residues.

The protein belongs to the eukaryotic RPB4 RNA polymerase subunit family. As to quaternary structure, component of the RNA polymerase IV and V complexes. Interacts with NRPD1 and NRPE1. As to expression, expressed in shoot meristematic region and in root tips. Detected in cotyledons, flowers and young leaves.

Its subcellular location is the nucleus. DNA-dependent RNA polymerase catalyzes the transcription of DNA into RNA using the four ribonucleoside triphosphates as substrates. Component of RNA polymerases IV and V which mediate short-interfering RNAs (siRNA) accumulation and subsequent RNA-directed DNA methylation-dependent (RdDM) transcriptional gene silencing (TGS) of endogenous repeated sequences, including transposable elements. Required for the de novo DNA methylation directed by the RdDM pathway. The sequence is that of DNA-directed RNA polymerases IV and V subunit 4 (NRPD4) from Arabidopsis thaliana (Mouse-ear cress).